Here is a 156-residue protein sequence, read N- to C-terminus: Small ribosomal subunit protein uS7 (156 aa).

Belongs to the universal ribosomal protein uS7 family. Part of the 30S ribosomal subunit. Contacts proteins S9 and S11.

One of the primary rRNA binding proteins, it binds directly to 16S rRNA where it nucleates assembly of the head domain of the 30S subunit. Is located at the subunit interface close to the decoding center, probably blocks exit of the E-site tRNA. The sequence is that of Small ribosomal subunit protein uS7 from Pseudomonas fluorescens (strain SBW25).